A 460-amino-acid chain; its full sequence is Tyrosine-protein phosphatase non-receptor type 18 (460 aa).

In terms of domain architecture, Tyrosine-protein phosphatase spans 26-291 (LAGEFSDIQA…RFLYHTVAQM (266 aa)). Residues aspartate 197, 229–235 (CSAGCGR), and glutamine 276 each bind substrate. Cysteine 229 acts as the Phosphocysteine intermediate in catalysis. The segment at 361–460 (GAPAGAGSGT…RDPPAEWTRV (100 aa)) is disordered. Over residues 364 to 378 (AGAGSGTQTGTGTGT) the composition is skewed to gly residues. Tyrosine 389 carries the phosphotyrosine modification. The residue at position 393 (threonine 393) is a Phosphothreonine. Residue tyrosine 426 is modified to Phosphotyrosine. Residues 449–460 (GPRDPPAEWTRV) are compositionally biased toward basic and acidic residues.

Belongs to the protein-tyrosine phosphatase family. Non-receptor class 4 subfamily. As to quaternary structure, interacts with PSTPIP1. Expressed in brain, colon and several tumor-derived cell lines.

The protein localises to the nucleus. It localises to the cytoplasm. It catalyses the reaction O-phospho-L-tyrosyl-[protein] + H2O = L-tyrosyl-[protein] + phosphate. Differentially dephosphorylate autophosphorylated tyrosine kinases which are known to be overexpressed in tumor tissues. The chain is Tyrosine-protein phosphatase non-receptor type 18 (PTPN18) from Homo sapiens (Human).